Here is a 192-residue protein sequence, read N- to C-terminus: MVVNVVIVAKKYFLFITLLIIQVSLPAHAGTDEKGWFNTFTDNVAETWREPEHYDLYIPAITWHARFAYDKRKTDRYNERPWGGGFGQSRWDEKGNWHGLYVMAFKDSWNKWEPIGGYGWESTWRPLPDDNFHLGLGFTAGVTARDNWKYIPVPVLLPLASIGYGPATFQMTYIPGTYNNGNVYFAWMRFQF.

Positions 1–29 are cleaved as a signal peptide; that stretch reads MVVNVVIVAKKYFLFITLLIIQVSLPAHA. Residues His64, Asp107, and Ser108 contribute to the active site.

Belongs to the lipid A palmitoyltransferase family. In terms of assembly, homodimer.

The protein resides in the cell outer membrane. The enzyme catalyses a lipid A + a 1,2-diacyl-sn-glycero-3-phosphocholine = a hepta-acyl lipid A + a 2-acyl-sn-glycero-3-phosphocholine. It catalyses the reaction a lipid IVA + a 1,2-diacyl-sn-glycero-3-phosphocholine = a lipid IVB + a 2-acyl-sn-glycero-3-phosphocholine. It carries out the reaction a lipid IIA + a 1,2-diacyl-sn-glycero-3-phosphocholine = a lipid IIB + a 2-acyl-sn-glycero-3-phosphocholine. Transfers a fatty acid residue from the sn-1 position of a phospholipid to the N-linked hydroxyfatty acid chain on the proximal unit of lipid A or its precursors. The sequence is that of Lipid A acyltransferase PagP from Citrobacter rodentium (strain ICC168) (Citrobacter freundii biotype 4280).